A 110-amino-acid chain; its full sequence is Protein C-ets-2 (110 aa).

The segment at residues 1 to 84 is a DNA-binding region (ETS); sequence SGPIQLWQFL…AGKRYVYRFV (84 aa).

This sequence belongs to the ETS family.

It localises to the nucleus. In terms of biological role, probable transcription factor. The polypeptide is Protein C-ets-2 (ETS-2) (Lytechinus variegatus (Green sea urchin)).